The chain runs to 908 residues: Alanine--tRNA ligase (908 aa).

Residues His-596, His-600, Cys-698, and His-702 each contribute to the Zn(2+) site.

Belongs to the class-II aminoacyl-tRNA synthetase family. Zn(2+) serves as cofactor.

It localises to the cytoplasm. The catalysed reaction is tRNA(Ala) + L-alanine + ATP = L-alanyl-tRNA(Ala) + AMP + diphosphate. Its function is as follows. Catalyzes the attachment of alanine to tRNA(Ala) in a two-step reaction: alanine is first activated by ATP to form Ala-AMP and then transferred to the acceptor end of tRNA(Ala). Also edits incorrectly charged Ser-tRNA(Ala) and Gly-tRNA(Ala) via its editing domain. The polypeptide is Alanine--tRNA ligase (Lysinibacillus sphaericus (strain C3-41)).